The chain runs to 260 residues: Putative cysteine-rich repeat secretory protein 23 (260 aa).

A signal peptide spans 1-31 (MSSSFVYKSLFLVPILAVVAMQLSFVQSVLS). Gnk2-homologous domains are found at residues 38–136 (YLHH…NISY) and 142–254 (LPEQ…LYLF).

The protein belongs to the cysteine-rich repeat secretory protein family.

It is found in the secreted. The sequence is that of Putative cysteine-rich repeat secretory protein 23 (CRRSP23) from Arabidopsis thaliana (Mouse-ear cress).